Here is a 98-residue protein sequence, read N- to C-terminus: MPYIYMNITLAFVISLIGTLMYRSHLMSSLLCLEGMMLSLFTLNALLSLNMNFTLSTTVPLILLVFAACEAAVGLALLIMISNTYGLDYVQNLNLLQC.

3 helical membrane passes run 1–21 (MPYI…GTLM), 29–49 (SLLC…LLSL), and 61–81 (LILL…LIMI).

The protein belongs to the complex I subunit 4L family. Core subunit of respiratory chain NADH dehydrogenase (Complex I) which is composed of 45 different subunits.

The protein resides in the mitochondrion inner membrane. It catalyses the reaction a ubiquinone + NADH + 5 H(+)(in) = a ubiquinol + NAD(+) + 4 H(+)(out). Functionally, core subunit of the mitochondrial membrane respiratory chain NADH dehydrogenase (Complex I) which catalyzes electron transfer from NADH through the respiratory chain, using ubiquinone as an electron acceptor. Part of the enzyme membrane arm which is embedded in the lipid bilayer and involved in proton translocation. The polypeptide is NADH-ubiquinone oxidoreductase chain 4L (MT-ND4L) (Mammuthus primigenius (Siberian woolly mammoth)).